Reading from the N-terminus, the 127-residue chain is Mitochondrial pyruvate carrier 2 (127 aa).

At 2-40 (AAAGARGLRATYHRLMDKVELLLPKKLRPLYNHPAGPRT) the chain is on the mitochondrial matrix side. Lysine 26 is subject to N6-acetyllysine. A helical membrane pass occupies residues 41–61 (VFFWAPIMKWGLVCAGLADMA). Topologically, residues 62-72 (RPAEKLSTAQS) are mitochondrial intermembrane. The chain crosses the membrane as a helical span at residues 73 to 90 (TVLMATGFIWSRYSLVII). Topologically, residues 91 to 95 (PKNWS) are mitochondrial matrix. The chain crosses the membrane as a helical span at residues 96–115 (LFAVNFFVGSAGASQLFRIW). At 116 to 127 (KYNQELKSKGIQ) the chain is on the mitochondrial intermembrane side.

It belongs to the mitochondrial pyruvate carrier (MPC) (TC 2.A.105) family. Homodimer. Homooligomer. Forms heterodimers with MPC1 and MPC1L. The heterodimer is the more stable and dominant form. In terms of tissue distribution, liver, kidney, and brain.

It is found in the mitochondrion inner membrane. It carries out the reaction pyruvate(out) + H(+)(out) = pyruvate(in) + H(+)(in). Its function is as follows. Mediates the uptake of pyruvate into mitochondria. The sequence is that of Mitochondrial pyruvate carrier 2 (Mpc2) from Rattus norvegicus (Rat).